We begin with the raw amino-acid sequence, 755 residues long: Photosystem I P700 chlorophyll a apoprotein A1 (755 aa).

8 consecutive transmembrane segments (helical) span residues 72–95 (IFSA…YHGA), 158–181 (LLCT…FHYH), 197–221 (LNHH…HVAI), 297–315 (QAHH…GHMY), 352–375 (WHAQ…QHMY), 391–417 (ISLF…IYMV), 439–461 (AIIS…FYVH), and 536–554 (FMVH…LILL). Positions 578 and 587 each coordinate [4Fe-4S] cluster. The next 2 membrane-spanning stretches (helical) occupy residues 594–615 (HVFL…HFSW) and 669–691 (LSAY…MFLF). Residue histidine 680 coordinates chlorophyll a'. Chlorophyll a contacts are provided by methionine 688 and tyrosine 696. Tryptophan 697 provides a ligand contact to phylloquinone. Residues 729 to 749 (AVGVAHYLLGGIVTTWAFFLA) traverse the membrane as a helical segment.

Belongs to the PsaA/PsaB family. The PsaA/B heterodimer binds the P700 chlorophyll special pair and subsequent electron acceptors. PSI consists of a core antenna complex that captures photons, and an electron transfer chain that converts photonic excitation into a charge separation. The cyanobacterial PSI reaction center is composed of one copy each of PsaA,B,C,D,E,F,I,J,K,L,M and X, and forms trimeric complexes. Requires PSI electron transfer chain: 5 chlorophyll a, 1 chlorophyll a', 2 phylloquinones and 3 4Fe-4S clusters. PSI core antenna: 90 chlorophyll a, 22 carotenoids, 3 phospholipids and 1 galactolipid. P700 is a chlorophyll a/chlorophyll a' dimer, A0 is one or more chlorophyll a, A1 is one or both phylloquinones and FX is a shared 4Fe-4S iron-sulfur center. as cofactor.

The protein localises to the cellular thylakoid membrane. The catalysed reaction is reduced [plastocyanin] + hnu + oxidized [2Fe-2S]-[ferredoxin] = oxidized [plastocyanin] + reduced [2Fe-2S]-[ferredoxin]. PsaA and PsaB bind P700, the primary electron donor of photosystem I (PSI), as well as the electron acceptors A0, A1 and FX. PSI is a plastocyanin/cytochrome c6-ferredoxin oxidoreductase, converting photonic excitation into a charge separation, which transfers an electron from the donor P700 chlorophyll pair to the spectroscopically characterized acceptors A0, A1, FX, FA and FB in turn. Oxidized P700 is reduced on the lumenal side of the thylakoid membrane by plastocyanin or cytochrome c6. The protein is Photosystem I P700 chlorophyll a apoprotein A1 of Synechococcus sp. (strain JA-2-3B'a(2-13)) (Cyanobacteria bacterium Yellowstone B-Prime).